Consider the following 209-residue polypeptide: Thymidine kinase (209 aa).

Residues 9–16 (AAMNAGKS) and 88–91 (DEAQ) contribute to the ATP site. E89 acts as the Proton acceptor in catalysis. The Zn(2+) site is built by C146, C148, C183, and H186.

Belongs to the thymidine kinase family. As to quaternary structure, homotetramer.

The protein localises to the cytoplasm. The enzyme catalyses thymidine + ATP = dTMP + ADP + H(+). This is Thymidine kinase from Legionella pneumophila (strain Paris).